Consider the following 352-residue polypeptide: Sperm equatorial segment protein 1 (352 aa).

Residues 1-19 (MKSLVLLVALLLWSSSVPA) form the signal peptide. N-linked (GlcNAc...) asparagine glycosylation is present at asparagine 128. Positions 140–203 (IEKEEPEPEP…TESEDVPQLS (64 aa)) are disordered. Over residues 166–193 (TESSTSPYVTSYKSPVTTSDRSTGIEIS) the composition is skewed to polar residues.

The protein belongs to the SPESP1 family. Glycosylated. In testis there are two predominant forms of 77- and 67-kDa and a form of 47-kDa, whereas in epididymal sperm from caput, corpus, and cauda there are two forms of 47- and 43-kDa. Testis forms contain complex carbohydrate residues. Epididymal sperm forms are N-glycosylated. Then undergoes significant glycosylation in the testis and that the majority of these glycoconjugates are removed by the time sperm reach the caput epididymis.

The protein localises to the cytoplasmic vesicle. The protein resides in the secretory vesicle. It is found in the acrosome. In terms of biological role, involved in fertilization ability of sperm. This chain is Sperm equatorial segment protein 1, found in Macaca fascicularis (Crab-eating macaque).